A 217-amino-acid polypeptide reads, in one-letter code: Probable cutinase 3 (217 aa).

The first 17 residues, 1–17 (MSLRSLFVAGLATLALA), serve as a signal peptide directing secretion. Cystine bridges form between Cys39–Cys118 and Cys65–Cys79. Catalysis depends on Ser129, which acts as the Nucleophile. The cysteines at positions 180 and 187 are disulfide-linked. Asp184 is a catalytic residue. The Proton donor/acceptor role is filled by His197.

This sequence belongs to the cutinase family.

It localises to the secreted. It catalyses the reaction cutin + H2O = cutin monomers.. In terms of biological role, catalyzes the hydrolysis of complex carboxylic polyesters found in the cell wall of plants. Degrades cutin, a macromolecule that forms the structure of the plant cuticle. In Aspergillus fumigatus (strain CBS 144.89 / FGSC A1163 / CEA10) (Neosartorya fumigata), this protein is Probable cutinase 3.